We begin with the raw amino-acid sequence, 332 residues long: MKPRVFVTREIPERGLSKIEEHFELDLWKDEAPPSKKVIIERVKDCDALVSLLTDPIDAEVFEAAPKLRIVAQYAVGYDNIDVKEATKRGIYVTNTPGVLTETTADFAFALLMAAARRVVEADRYVREGKWKVAWHPMMMLGYDVYGRTLGIVGMGRIGAAVARRAKGFGMRILYYDSIRREDFEKELGVEYVPLEKLLEESDFVSLHVPLTEETYHMIGEEQLRRMKRTAILVNTSRGKVVDQKALYKALKEGWIAGAGLDVFEQEPIPPDDPLLKLENVVLAPHAASASHETRSRMAEMVAENLIAFKRGEIPPNLVNQEVVKVRPPGFQ.

NADP(+) contacts are provided by residues 155–158 (MGRI) and 236–238 (TSR). Catalysis depends on residues Arg-238 and Glu-267. Residue His-286 is the Proton donor of the active site. 286-288 (HAA) is an NADP(+) binding site.

This sequence belongs to the D-isomer specific 2-hydroxyacid dehydrogenase family. GyaR subfamily. Homodimer.

The protein resides in the cytoplasm. The enzyme catalyses glycolate + NAD(+) = glyoxylate + NADH + H(+). This Korarchaeum cryptofilum (strain OPF8) protein is Glyoxylate reductase.